A 308-amino-acid chain; its full sequence is Ribosomal RNA small subunit methyltransferase H (308 aa).

Residues Gly33–His35, Asp52, Phe78, Asp99, and Gln106 contribute to the S-adenosyl-L-methionine site. A disordered region spans residues Glu289–Leu308.

It belongs to the methyltransferase superfamily. RsmH family.

It is found in the cytoplasm. It carries out the reaction cytidine(1402) in 16S rRNA + S-adenosyl-L-methionine = N(4)-methylcytidine(1402) in 16S rRNA + S-adenosyl-L-homocysteine + H(+). Specifically methylates the N4 position of cytidine in position 1402 (C1402) of 16S rRNA. The polypeptide is Ribosomal RNA small subunit methyltransferase H (Thermoanaerobacter sp. (strain X514)).